The following is an 85-amino-acid chain: F(1)-ATPase inhibitor IF(1), mitochondrial (85 aa).

The N-terminal 22 residues, Met-1–Tyr-22, are a transit peptide targeting the mitochondrion. Positions Lys-41 to Thr-84 form a coiled coil.

It belongs to the ATPase inhibitor family. As to quaternary structure, monomer and homodimer. The protein aggregates less strongly with increasing pH.

It localises to the mitochondrion. Functionally, endogenous ATPase inhibitor, which inhibits specifically the reverse ATPase reaction of mitochondrial F(1)F(0)-type ATP synthase. It limits ATP depletion when the mitochondrial membrane potential falls below a threshold and the F(1)F(0)-ATP synthase starts hydrolyzing ATP to pump protons out of the mitochondrial matrix. Required to avoid the consumption of cellular ATP when the F(1)F(0)-ATP synthase enzyme acts as an ATP hydrolase. Functions through inserting its N-terminal part into the catalytically active F1-ATPase, thereby blocking its rotational movement and subsequently the ATP hydrolase activity. This is F(1)-ATPase inhibitor IF(1), mitochondrial (INH1) from Saccharomyces cerevisiae (strain ATCC 204508 / S288c) (Baker's yeast).